The following is a 274-amino-acid chain: 2,3,4,5-tetrahydropyridine-2,6-dicarboxylate N-succinyltransferase (274 aa).

Residues Arg106 and Asp143 each contribute to the substrate site.

This sequence belongs to the transferase hexapeptide repeat family. In terms of assembly, homotrimer.

The protein localises to the cytoplasm. The enzyme catalyses (S)-2,3,4,5-tetrahydrodipicolinate + succinyl-CoA + H2O = (S)-2-succinylamino-6-oxoheptanedioate + CoA. It functions in the pathway amino-acid biosynthesis; L-lysine biosynthesis via DAP pathway; LL-2,6-diaminopimelate from (S)-tetrahydrodipicolinate (succinylase route): step 1/3. The polypeptide is 2,3,4,5-tetrahydropyridine-2,6-dicarboxylate N-succinyltransferase (Rickettsia typhi (strain ATCC VR-144 / Wilmington)).